The following is a 340-amino-acid chain: N-acetyl-gamma-glutamyl-phosphate reductase (340 aa).

Residue C146 is part of the active site.

Belongs to the NAGSA dehydrogenase family. Type 1 subfamily.

It is found in the cytoplasm. The catalysed reaction is N-acetyl-L-glutamate 5-semialdehyde + phosphate + NADP(+) = N-acetyl-L-glutamyl 5-phosphate + NADPH + H(+). Its pathway is amino-acid biosynthesis; L-arginine biosynthesis; N(2)-acetyl-L-ornithine from L-glutamate: step 3/4. Functionally, catalyzes the NADPH-dependent reduction of N-acetyl-5-glutamyl phosphate to yield N-acetyl-L-glutamate 5-semialdehyde. The sequence is that of N-acetyl-gamma-glutamyl-phosphate reductase from Streptococcus mutans serotype c (strain ATCC 700610 / UA159).